A 329-amino-acid chain; its full sequence is Biotin synthase (329 aa).

In terms of domain architecture, Radical SAM core spans G36–K260. C51, C55, and C58 together coordinate [4Fe-4S] cluster. [2Fe-2S] cluster is bound by residues C95, C126, C186, and R264.

Belongs to the radical SAM superfamily. Biotin synthase family. Homodimer. It depends on [4Fe-4S] cluster as a cofactor. [2Fe-2S] cluster serves as cofactor.

The enzyme catalyses (4R,5S)-dethiobiotin + (sulfur carrier)-SH + 2 reduced [2Fe-2S]-[ferredoxin] + 2 S-adenosyl-L-methionine = (sulfur carrier)-H + biotin + 2 5'-deoxyadenosine + 2 L-methionine + 2 oxidized [2Fe-2S]-[ferredoxin]. Its pathway is cofactor biosynthesis; biotin biosynthesis; biotin from 7,8-diaminononanoate: step 2/2. In terms of biological role, catalyzes the conversion of dethiobiotin (DTB) to biotin by the insertion of a sulfur atom into dethiobiotin via a radical-based mechanism. The polypeptide is Biotin synthase (Sphingopyxis alaskensis (strain DSM 13593 / LMG 18877 / RB2256) (Sphingomonas alaskensis)).